Reading from the N-terminus, the 466-residue chain is Methylenetetrahydrofolate--tRNA-(uracil-5-)-methyltransferase TrmFO (466 aa).

12–17 (GAGLAG) contributes to the FAD binding site.

The protein belongs to the MnmG family. TrmFO subfamily. It depends on FAD as a cofactor.

The protein localises to the cytoplasm. It catalyses the reaction uridine(54) in tRNA + (6R)-5,10-methylene-5,6,7,8-tetrahydrofolate + NADH + H(+) = 5-methyluridine(54) in tRNA + (6S)-5,6,7,8-tetrahydrofolate + NAD(+). It carries out the reaction uridine(54) in tRNA + (6R)-5,10-methylene-5,6,7,8-tetrahydrofolate + NADPH + H(+) = 5-methyluridine(54) in tRNA + (6S)-5,6,7,8-tetrahydrofolate + NADP(+). Functionally, catalyzes the folate-dependent formation of 5-methyl-uridine at position 54 (M-5-U54) in all tRNAs. In Synechococcus elongatus (strain ATCC 33912 / PCC 7942 / FACHB-805) (Anacystis nidulans R2), this protein is Methylenetetrahydrofolate--tRNA-(uracil-5-)-methyltransferase TrmFO.